The chain runs to 216 residues: Flagellin B3 (216 aa).

Positions 1–11 (MLLDYIKSRRG) are excised as a propeptide.

The protein belongs to the archaeal flagellin family.

Its subcellular location is the archaeal flagellum. Its function is as follows. Flagellin is the subunit protein which polymerizes to form the filaments of archaeal flagella. The polypeptide is Flagellin B3 (flaB3) (Methanocaldococcus jannaschii (strain ATCC 43067 / DSM 2661 / JAL-1 / JCM 10045 / NBRC 100440) (Methanococcus jannaschii)).